The primary structure comprises 1220 residues: DNA polymerase catalytic subunit (1220 aa).

2 disordered regions span residues 21-43 (GKRPFFRPGSGQTAETERPRPPQ) and 641-691 (QADA…KPGV). Over residues 646 to 660 (SETSELAMDSQSHAF) the composition is skewed to polar residues.

Belongs to the DNA polymerase type-B family. As to quaternary structure, forms a complex with the ssDNA-binding protein, the DNA polymerase processivity factor, and the alkaline exonuclease. Interacts with the helicase-primase complex composed of the primase, the helicase and the primase-associated factor; this interaction may coordinate leading and lagging strand DNA synthesis at the replication fork.

Its subcellular location is the host nucleus. It catalyses the reaction DNA(n) + a 2'-deoxyribonucleoside 5'-triphosphate = DNA(n+1) + diphosphate. The enzyme catalyses Endonucleolytic cleavage to 5'-phosphomonoester.. Functionally, replicates viral genomic DNA. The replication complex is composed of six viral proteins: the DNA polymerase, processivity factor, primase, primase-associated factor, helicase, and ssDNA-binding protein. Additionally, the polymerase contains an intrinsic ribonuclease H (RNase H) activity that specifically degrades RNA/DNA heteroduplexes or duplex DNA substrates in the 5' to 3' direction. Therefore, it can catalyze the excision of the RNA primers that initiate the synthesis of Okazaki fragments at a replication fork during viral DNA replication. This chain is DNA polymerase catalytic subunit, found in Equus caballus (Horse).